The chain runs to 287 residues: Small ribosomal subunit protein uS3 (287 aa).

A KH type-2 domain is found at 38-106 (IRRLLATGLE…QVQLNILEVK (69 aa)). Positions 216 to 287 (AAAPAGADRP…AETTTQNPGS (72 aa)) are disordered. Low complexity predominate over residues 238–287 (SGASGTTATSTDAGRAASGTQEAPAAAEAAAGTEAAAGAAAETTTQNPGS).

Belongs to the universal ribosomal protein uS3 family. In terms of assembly, part of the 30S ribosomal subunit. Forms a tight complex with proteins S10 and S14.

Its function is as follows. Binds the lower part of the 30S subunit head. Binds mRNA in the 70S ribosome, positioning it for translation. This Mycobacterium sp. (strain JLS) protein is Small ribosomal subunit protein uS3.